A 919-amino-acid chain; its full sequence is Valine--tRNA ligase (919 aa).

The 'HIGH' region motif lies at 66–76 (PNVTGQLHMGH). A 'KMSKS' region motif is present at residues 562 to 566 (KMSKS). Lysine 565 serves as a coordination point for ATP. The stretch at 852–919 (TVDKEAERKR…RISARLEELK (68 aa)) forms a coiled coil.

The protein belongs to the class-I aminoacyl-tRNA synthetase family. ValS type 1 subfamily. In terms of assembly, monomer.

It is found in the cytoplasm. The catalysed reaction is tRNA(Val) + L-valine + ATP = L-valyl-tRNA(Val) + AMP + diphosphate. Functionally, catalyzes the attachment of valine to tRNA(Val). As ValRS can inadvertently accommodate and process structurally similar amino acids such as threonine, to avoid such errors, it has a 'posttransfer' editing activity that hydrolyzes mischarged Thr-tRNA(Val) in a tRNA-dependent manner. This is Valine--tRNA ligase from Corynebacterium diphtheriae (strain ATCC 700971 / NCTC 13129 / Biotype gravis).